The sequence spans 149 residues: MKIILKENFETLGKAGEIVKVADGYARNFLIPKGIAAEANLRNIKALEHDKQNIVRKAEKERKRHESLAASLSGVTCTIARRVGEQDKLFGSVTAMDIEEALLAQNVKIDRKSIVLDEPIKAIGEFPIVIKLGAGVTAEIKVNVVPEQA.

This sequence belongs to the bacterial ribosomal protein bL9 family.

Functionally, binds to the 23S rRNA. In Syntrophus aciditrophicus (strain SB), this protein is Large ribosomal subunit protein bL9.